The following is a 132-amino-acid chain: Large ribosomal subunit protein bL20c (132 aa).

It belongs to the bacterial ribosomal protein bL20 family.

The protein resides in the plastid. It localises to the chloroplast. Functionally, binds directly to 23S ribosomal RNA and is necessary for the in vitro assembly process of the 50S ribosomal subunit. It is not involved in the protein synthesizing functions of that subunit. In Coffea arabica (Arabian coffee), this protein is Large ribosomal subunit protein bL20c.